Here is a 407-residue protein sequence, read N- to C-terminus: Putative D-cysteine desulfhydrase 2, mitochondrial (407 aa).

The N-terminal 34 residues, 1–34 (MRPSPALAGGGRTVANLLSATEWMLPSPATQVHT), are a transit peptide targeting the mitochondrion. Residues 39–72 (PSHSPPSPPHHFAFSNLTTAPKRNGGKGEEEGRP) form a disordered region. N6-(pyridoxal phosphate)lysine is present on Lys90.

It belongs to the ACC deaminase/D-cysteine desulfhydrase family. Pyridoxal 5'-phosphate is required as a cofactor.

Its subcellular location is the mitochondrion. It catalyses the reaction D-cysteine + H2O = hydrogen sulfide + pyruvate + NH4(+) + H(+). In terms of biological role, catalyzes the production of hydrogen sulfide (H2S) from cysteine. The sequence is that of Putative D-cysteine desulfhydrase 2, mitochondrial from Oryza sativa subsp. japonica (Rice).